A 342-amino-acid chain; its full sequence is MEIINACLKNVGVEENMIEKVIETFQKENDECYNLVHIFNKAAIVFHRNGQHKKSLEMYEKAFGNIFNGEFALSDLFYSVNGMASMYQALGDYDIAIKKYNSVIKIIKDMCLDNNSDLVYALMGIASISQIKGNYDEALSKYNEALEINEKLYGRNHIETAFVLNRLGMLYHELDDNDKSIDHFNESLKIYREKYPNKLFNIAFTISRLAQSLLKMGNDSEALEKYQESIDIFNKIFTISHQAVAFSLYGIGTVYEFRSEYSKALEKYQESLQTYKNVYERSEKYQHYDIASCLYKIGLVYKLSGNDNESTTYLNQANQMFESTSTNINDKNYQACKKFLQD.

7 TPR repeats span residues 36–69, 77–110, 119–152, 161–194, 203–236, 245–278, and 291–324; these read VHIFNKAAIVFHRNGQHKKSLEMYEKAFGNIFNG, FYSVNGMASMYQALGDYDIAIKKYNSVIKIIKDM, VYALMGIASISQIKGNYDEALSKYNEALEINEKL, AFVLNRLGMLYHELDDNDKSIDHFNESLKIYREK, AFTISRLAQSLLKMGNDSEALEKYQESIDIFNKI, AFSLYGIGTVYEFRSEYSKALEKYQESLQTYKNV, and ASCLYKIGLVYKLSGNDNESTTYLNQANQMFEST.

The polypeptide is Putative TPR repeat-containing protein R856 (Acanthamoeba polyphaga mimivirus (APMV)).